Here is a 150-residue protein sequence, read N- to C-terminus: uncharacterized protein (150 aa).

This is an uncharacterized protein from Mycoplasma genitalium (strain ATCC 33530 / DSM 19775 / NCTC 10195 / G37) (Mycoplasmoides genitalium).